A 273-amino-acid chain; its full sequence is Undecaprenyl-diphosphatase (273 aa).

8 helical membrane passes run 18–40 (GLTEFLPVSSTGHMILVGSLLGF), 45–65 (AKTFEVIIQLGSILAVVVVFW), 92–112 (GHILLGMIPAVVLGLVFHEQI), 114–134 (AIFAPIYVMYALVVGGVLLLA), 151–171 (LTYLQAFLIGCFQCLALWPGF), 189–209 (YAASEFSFILAVPMMLGATVL), 225–245 (MFAIGFVTAFVVALLAIKFFL), and 253–273 (FVPFAIYRFILAVVVYWILIG).

Belongs to the UppP family.

It localises to the cell inner membrane. It carries out the reaction di-trans,octa-cis-undecaprenyl diphosphate + H2O = di-trans,octa-cis-undecaprenyl phosphate + phosphate + H(+). Catalyzes the dephosphorylation of undecaprenyl diphosphate (UPP). Confers resistance to bacitracin. In Sodalis glossinidius (strain morsitans), this protein is Undecaprenyl-diphosphatase.